A 33-amino-acid polypeptide reads, in one-letter code: Photosystem II reaction center protein Psb30 (33 aa).

Residues 5-25 (VVAQLTVLALIVVSGPLVIGL) form a helical membrane-spanning segment.

This sequence belongs to the Psb30/Ycf12 family. As to quaternary structure, PSII is composed of 1 copy each of membrane proteins PsbA, PsbB, PsbC, PsbD, PsbE, PsbF, PsbH, PsbI, PsbJ, PsbK, PsbL, PsbM, PsbT, PsbX, PsbY, PsbZ, Psb30/Ycf12, peripheral proteins of the oxygen-evolving complex and a large number of cofactors. It forms dimeric complexes.

It is found in the plastid. Its subcellular location is the chloroplast thylakoid membrane. Its function is as follows. A core subunit of photosystem II (PSII), probably helps stabilize the reaction center. The sequence is that of Photosystem II reaction center protein Psb30 from Zygnema circumcarinatum (Green alga).